A 597-amino-acid polypeptide reads, in one-letter code: K(+) efflux antiporter 6 (597 aa).

The N-terminal stretch at 1–35 (MVEGRRRRRFSLSSQQLALLLLLLSFFLCFSVASP) is a signal peptide. A run of 12 helical transmembrane segments spans residues 177–197 (LISD…AFAC), 201–221 (PVIT…LNFI), 224–244 (MVQV…ALGL), 257–277 (VAVL…GITV), 287–307 (GVFV…KFLM), 321–341 (IGIL…LPVL), 351–371 (MLSI…LSIL), 396–416 (LAAV…GLSL), 440–460 (IEPI…MLVN), 461–481 (VHFL…VIII), 499–519 (TALL…VLLS), and 543–563 (LVTT…GILL).

The protein belongs to the monovalent cation:proton antiporter 2 (CPA2) transporter (TC 2.A.37) family. KEA (TC 2.A.37.1) subfamily. As to expression, expressed in roots, stems, leaves, flowers and silique.

The protein localises to the golgi apparatus membrane. It localises to the golgi apparatus. The protein resides in the trans-Golgi network membrane. Its subcellular location is the prevacuolar compartment membrane. It is found in the endomembrane system. The catalysed reaction is K(+)(in) + H(+)(out) = K(+)(out) + H(+)(in). In terms of biological role, electroneutral K(+)/H(+) efflux antiporter involved in K(+) homeostasis and osmotic adjustment. Together with KEA4 and KEA5, promotes growth and development, and facilitates endosomal pH and ions homeostasis, as well as salt tolerance (e.g. K(+), NaCl and LiCl), probably by supporting cell wall biosynthesis during rapid etiolated seedling growth. The sequence is that of K(+) efflux antiporter 6 from Arabidopsis thaliana (Mouse-ear cress).